A 90-amino-acid chain; its full sequence is Small ribosomal subunit protein bS20 (90 aa).

Positions 1–21 are disordered; the sequence is MANHKSALKRVRQTKKRTERN.

This sequence belongs to the bacterial ribosomal protein bS20 family.

Its function is as follows. Binds directly to 16S ribosomal RNA. This chain is Small ribosomal subunit protein bS20, found in Nitratiruptor sp. (strain SB155-2).